The following is a 106-amino-acid chain: Apovitellenin-1 (106 aa).

Positions 1-24 (MVQYRALVIAVILLLSTTVPEVHS) are cleaved as a signal peptide.

Belongs to the apovitellenin family. In terms of assembly, homodimer; disulfide-linked. As to expression, produced by the liver, secreted into the blood and then sequestred by receptor mediated endocytosis into growing oocytes.

Its function is as follows. Protein component of the very low density lipoprotein (VLDL) of egg-laying females. Potent lipoprotein lipase inhibitor, preventing the loss of triglycerides from VLDL on their way from the liver to the growing oocytes. This chain is Apovitellenin-1, found in Gallus gallus (Chicken).